The following is a 184-amino-acid chain: ATP synthase subunit delta (184 aa).

It belongs to the ATPase delta chain family. F-type ATPases have 2 components, F(1) - the catalytic core - and F(0) - the membrane proton channel. F(1) has five subunits: alpha(3), beta(3), gamma(1), delta(1), epsilon(1). CF(0) has four main subunits: a(1), b(1), b'(1) and c(10-14). The alpha and beta chains form an alternating ring which encloses part of the gamma chain. F(1) is attached to F(0) by a central stalk formed by the gamma and epsilon chains, while a peripheral stalk is formed by the delta, b and b' chains.

The protein resides in the cellular thylakoid membrane. Functionally, f(1)F(0) ATP synthase produces ATP from ADP in the presence of a proton or sodium gradient. F-type ATPases consist of two structural domains, F(1) containing the extramembraneous catalytic core and F(0) containing the membrane proton channel, linked together by a central stalk and a peripheral stalk. During catalysis, ATP synthesis in the catalytic domain of F(1) is coupled via a rotary mechanism of the central stalk subunits to proton translocation. In terms of biological role, this protein is part of the stalk that links CF(0) to CF(1). It either transmits conformational changes from CF(0) to CF(1) or is implicated in proton conduction. This is ATP synthase subunit delta from Gloeothece citriformis (strain PCC 7424) (Cyanothece sp. (strain PCC 7424)).